Consider the following 521-residue polypeptide: D-aminoacyl-tRNA deacylase (521 aa).

Disordered regions lie at residues 323 to 353 (AVGT…SEDS) and 499 to 521 (VFST…SSSS). Positions 343-353 (VDAERTESEDS) are enriched in basic and acidic residues. The segment covering 501–521 (STSSSSSSSSSSSSSSSSSSS) has biased composition (low complexity).

It belongs to the DtdA deacylase family. As to quaternary structure, monomer. Requires Zn(2+) as cofactor.

It catalyses the reaction a D-aminoacyl-tRNA + H2O = a tRNA + a D-alpha-amino acid + H(+). It carries out the reaction glycyl-tRNA(Ala) + H2O = tRNA(Ala) + glycine + H(+). D-aminoacyl-tRNA deacylase with broad substrate specificity. By recycling D-aminoacyl-tRNA to D-amino acids and free tRNA molecules, this enzyme counteracts the toxicity associated with the formation of D-aminoacyl-tRNA entities in vivo. The protein is D-aminoacyl-tRNA deacylase of Haloquadratum walsbyi (strain DSM 16790 / HBSQ001).